The primary structure comprises 171 residues: 3-hydroxydecanoyl-[acyl-carrier-protein] dehydratase (171 aa).

Residue His-70 is part of the active site.

Belongs to the thioester dehydratase family. FabA subfamily. In terms of assembly, homodimer.

It is found in the cytoplasm. It carries out the reaction a (3R)-hydroxyacyl-[ACP] = a (2E)-enoyl-[ACP] + H2O. The enzyme catalyses (3R)-hydroxydecanoyl-[ACP] = (2E)-decenoyl-[ACP] + H2O. The catalysed reaction is (2E)-decenoyl-[ACP] = (3Z)-decenoyl-[ACP]. It functions in the pathway lipid metabolism; fatty acid biosynthesis. Necessary for the introduction of cis unsaturation into fatty acids. Catalyzes the dehydration of (3R)-3-hydroxydecanoyl-ACP to E-(2)-decenoyl-ACP and then its isomerization to Z-(3)-decenoyl-ACP. Can catalyze the dehydratase reaction for beta-hydroxyacyl-ACPs with saturated chain lengths up to 16:0, being most active on intermediate chain length. This is 3-hydroxydecanoyl-[acyl-carrier-protein] dehydratase from Histophilus somni (strain 129Pt) (Haemophilus somnus).